The sequence spans 123 residues: Translation initiation factor 1A (123 aa).

Positions 1-11 (MSPDKTEDEDK) are enriched in acidic residues. A disordered region spans residues 1 to 26 (MSPDKTEDEDKDVNVDQDQFNEEEES). The S1-like domain occupies 28–102 (GRVILPNKKK…EKADVVYRYT (75 aa)).

It belongs to the eIF-1A family.

Functionally, seems to be required for maximal rate of protein biosynthesis. Enhances ribosome dissociation into subunits and stabilizes the binding of the initiator Met-tRNA(I) to 40 S ribosomal subunits. The chain is Translation initiation factor 1A (eIF1A) from Thermoplasma volcanium (strain ATCC 51530 / DSM 4299 / JCM 9571 / NBRC 15438 / GSS1).